We begin with the raw amino-acid sequence, 158 residues long: Transcription elongation factor GreA (158 aa).

Residues 4 to 75 are a coiled coil; sequence QKQYPMTQEG…QRVENMLRNA (72 aa).

This sequence belongs to the GreA/GreB family.

In terms of biological role, necessary for efficient RNA polymerase transcription elongation past template-encoded arresting sites. The arresting sites in DNA have the property of trapping a certain fraction of elongating RNA polymerases that pass through, resulting in locked ternary complexes. Cleavage of the nascent transcript by cleavage factors such as GreA or GreB allows the resumption of elongation from the new 3'terminus. GreA releases sequences of 2 to 3 nucleotides. In Staphylococcus saprophyticus subsp. saprophyticus (strain ATCC 15305 / DSM 20229 / NCIMB 8711 / NCTC 7292 / S-41), this protein is Transcription elongation factor GreA.